A 583-amino-acid polypeptide reads, in one-letter code: NudC domain-containing protein 1 (583 aa).

Residue Ser8 is modified to Phosphoserine. The region spanning 273 to 361 (IKEPLYYWQQ…NEGLTWPELV (89 aa)) is the CS domain. Ser388 is subject to Phosphoserine.

As to expression, isoform 1 is specifically expressed in leukemias and a variety of solid tumor cell lines and is also detected in testis and heart. Isoform 2 is predominantly expressed in testis and weakly expressed in tumor cells.

Its subcellular location is the cytoplasm. It localises to the nucleus. The chain is NudC domain-containing protein 1 from Homo sapiens (Human).